The chain runs to 241 residues: Alkylated DNA repair protein ALKBH6 homolog (241 aa).

The Fe2OG dioxygenase domain maps to 87–232 (AINHVLINEY…RVSLTCRLVP (146 aa)). His-105, Asp-107, and His-181 together coordinate Fe cation. Arg-223 and Arg-229 together coordinate 2-oxoglutarate.

The protein belongs to the alkB family. The cofactor is Fe(2+).

The protein resides in the nucleus. Functionally, probable RNA demethylase that binds to both N6-methyladenosine-containing- (m(6)A) and C5-methylcytidine-containing- (m(5)C) RNAs, thus being a probable m(6)A and m(5)C eraser. Involved in responses to abscisic acid (ABA) via the modulation of the expression of ABA signaling-related genes (e.g. ABI3 and ABI4). Acts as a negative regulator during seed germination under abiotic stresses (e.g. salt, cold and ABA). Positive modulator of seedling growth and survival in response to drought and heat, but counteracts tolerance to salt. This Arabidopsis thaliana (Mouse-ear cress) protein is Alkylated DNA repair protein ALKBH6 homolog.